Reading from the N-terminus, the 507-residue chain is Xylose import ATP-binding protein XylG (507 aa).

ABC transporter domains lie at 5–242 (LKMT…VGRE) and 259–504 (LEVK…LSEK). ATP is bound at residue 37 to 44 (GENGSGKS).

Belongs to the ABC transporter superfamily. Xylose importer (TC 3.A.1.2.4) family. The complex is composed of two ATP-binding proteins (XylG), two transmembrane proteins (XylH) and a solute-binding protein (XylF).

It localises to the cell inner membrane. The catalysed reaction is D-xylose(out) + ATP + H2O = D-xylose(in) + ADP + phosphate + H(+). Its function is as follows. Part of the ABC transporter complex XylFGH involved in xylose import. Responsible for energy coupling to the transport system. The protein is Xylose import ATP-binding protein XylG of Photobacterium profundum (strain SS9).